A 758-amino-acid chain; its full sequence is General transcription and DNA repair factor IIH helicase subunit XPD (758 aa).

One can recognise a Helicase ATP-binding domain in the interval 7–285 (DVTVYFPYDN…TDAGRLRAEY (279 aa)). 42-49 (MPTGTGKT) lines the ATP pocket. Residues Cys-116, Cys-134, Cys-155, and Cys-190 each coordinate [4Fe-4S] cluster. Positions 234–238 (DEAHN) match the DEAH box motif.

This sequence belongs to the helicase family. RAD3/XPD subfamily. Component of the 7-subunit TFIIH core complex composed of XPB, XPD, TFB1/GTF2H1, GTF2H2/P44, TFB4/GTF2H3, TFB2/GTF2H4 and TFB5/GTF2H5, which is active in NER. The core complex associates with the 3-subunit CDK-activating kinase (CAK) module composed of CYCH1/cyclin H1, CDKD and MAT1/At4g30820 to form the 10-subunit holoenzyme (holo-TFIIH) active in transcription. Interacts with GTF2H2/p44. Requires [4Fe-4S] cluster as cofactor. In terms of tissue distribution, expressed at low levels in all tissues.

It localises to the nucleus. The enzyme catalyses Couples ATP hydrolysis with the unwinding of duplex DNA at the replication fork by translocating in the 5'-3' direction. This creates two antiparallel DNA single strands (ssDNA). The leading ssDNA polymer is the template for DNA polymerase III holoenzyme which synthesizes a continuous strand.. It carries out the reaction ATP + H2O = ADP + phosphate + H(+). Its function is as follows. ATP-dependent 5'-3' DNA helicase, component of the general transcription and DNA repair factor IIH (TFIIH) core complex, which is involved in general and transcription-coupled nucleotide excision repair (NER) of damaged DNA and, when complexed to CDK-activating kinase (CAK), involved in transcription by RNA polymerase II. In NER, TFIIH acts by opening DNA around the lesion to allow the excision of the damaged oligonucleotide and its replacement by a new DNA fragment. The ATP-dependent helicase activity of XPD is required for DNA opening. In transcription, TFIIH has an essential role in transcription initiation. When the pre-initiation complex (PIC) has been established, TFIIH is required for promoter opening and promoter escape. Phosphorylation of the C-terminal tail (CTD) of the largest subunit of RNA polymerase II by the kinase module CAK controls the initiation of transcription. XPD acts by forming a bridge between CAK and the core-TFIIH complex. Essential during plant growth. May negatively regulate a common response program mediated by UV damage and heat stress, that leads to tissue death and reduced chloroplast function. The chain is General transcription and DNA repair factor IIH helicase subunit XPD from Arabidopsis thaliana (Mouse-ear cress).